We begin with the raw amino-acid sequence, 229 residues long: Prolactin (229 aa).

A signal peptide spans 1-30 (MDNKGWSLKGSLLPLLLLVSDLLLCQGVTS). A disulfide bridge links C34 with C41. Phosphoserine occurs at positions 56, 64, and 120. 2 disulfide bridges follow: C88–C204 and C221–C229.

The protein belongs to the somatotropin/prolactin family. As to quaternary structure, interacts with PRLR.

It is found in the secreted. Its function is as follows. Prolactin acts primarily on the mammary gland by promoting lactation. The chain is Prolactin (PRL) from Neovison vison (American mink).